The chain runs to 762 residues: Phosphoribosylformylglycinamidine synthase subunit PurL (762 aa).

The active site involves His-58. ATP contacts are provided by Tyr-61 and Lys-105. Glu-107 serves as a coordination point for Mg(2+). Substrate-binding positions include 108-111 (SHNH) and Arg-130. His-109 functions as the Proton acceptor in the catalytic mechanism. Asp-131 lines the Mg(2+) pocket. Residue Gln-260 coordinates substrate. Residue Asp-288 coordinates Mg(2+). 332–334 (ESQ) provides a ligand contact to substrate. Positions 520 and 557 each coordinate ATP. A Mg(2+)-binding site is contributed by Asn-558. Position 560 (Ser-560) interacts with substrate.

This sequence belongs to the FGAMS family. Monomer. Part of the FGAM synthase complex composed of 1 PurL, 1 PurQ and 2 PurS subunits.

The protein resides in the cytoplasm. The catalysed reaction is N(2)-formyl-N(1)-(5-phospho-beta-D-ribosyl)glycinamide + L-glutamine + ATP + H2O = 2-formamido-N(1)-(5-O-phospho-beta-D-ribosyl)acetamidine + L-glutamate + ADP + phosphate + H(+). The protein operates within purine metabolism; IMP biosynthesis via de novo pathway; 5-amino-1-(5-phospho-D-ribosyl)imidazole from N(2)-formyl-N(1)-(5-phospho-D-ribosyl)glycinamide: step 1/2. In terms of biological role, part of the phosphoribosylformylglycinamidine synthase complex involved in the purines biosynthetic pathway. Catalyzes the ATP-dependent conversion of formylglycinamide ribonucleotide (FGAR) and glutamine to yield formylglycinamidine ribonucleotide (FGAM) and glutamate. The FGAM synthase complex is composed of three subunits. PurQ produces an ammonia molecule by converting glutamine to glutamate. PurL transfers the ammonia molecule to FGAR to form FGAM in an ATP-dependent manner. PurS interacts with PurQ and PurL and is thought to assist in the transfer of the ammonia molecule from PurQ to PurL. In Rhodococcus erythropolis (strain PR4 / NBRC 100887), this protein is Phosphoribosylformylglycinamidine synthase subunit PurL.